We begin with the raw amino-acid sequence, 318 residues long: UDP-N-acetylenolpyruvoylglucosamine reductase (318 aa).

The FAD-binding PCMH-type domain maps to 38–204; that stretch reads IGGVCPVIVE…LGIEILLKEG (167 aa). Arg-182 is an active-site residue. Basic and acidic residues predominate over residues 212 to 229; it reads SLKDKRDRRNSSQPENKK. The disordered stretch occupies residues 212–232; sequence SLKDKRDRRNSSQPENKKSAG. Residue Ser-233 is the Proton donor of the active site. The active site involves Glu-310.

Belongs to the MurB family. Requires FAD as cofactor.

The protein localises to the cytoplasm. It catalyses the reaction UDP-N-acetyl-alpha-D-muramate + NADP(+) = UDP-N-acetyl-3-O-(1-carboxyvinyl)-alpha-D-glucosamine + NADPH + H(+). It functions in the pathway cell wall biogenesis; peptidoglycan biosynthesis. Its function is as follows. Cell wall formation. This is UDP-N-acetylenolpyruvoylglucosamine reductase from Leptospira interrogans serogroup Icterohaemorrhagiae serovar copenhageni (strain Fiocruz L1-130).